The chain runs to 264 residues: Osteopontin (264 aa).

A signal peptide spans 1–16 (MKLAFLCLCFISIAAA). Disordered stretches follow at residues 21–141 (KSRQ…RGDS) and 166–264 (IEDD…EVTR). The segment covering 31–51 (SEEKYDPRSHHTHRYHQDHVD) has biased composition (basic and acidic residues). Residues 52 to 73 (SQSQEHLQQTQNDLASLQQTHY) show a composition bias toward polar residues. Acidic residues predominate over residues 97–118 (AVDDDDDDDNDSNDTDESDEVV). 2 N-linked (GlcNAc...) asparagine glycosylation sites follow: N106 and N109. The Cell attachment site signature appears at 132–134 (RGD). Positions 186-212 (KESREQDSRELAQHQSVENDSRPRFDS) are enriched in basic and acidic residues. N-linked (GlcNAc...) asparagine glycosylation is found at N204 and N242. Polar residues predominate over residues 233–246 (ASRSAVDTSNQTLE). Residues 252–264 (EDRHSIENNEVTR) are compositionally biased toward basic and acidic residues.

This sequence belongs to the osteopontin family. Post-translationally, extensively phosphorylated on serine residues.

Its subcellular location is the secreted. In terms of biological role, major non-collagenous bone protein that binds tightly to hydroxyapatite. Appears to form an integral part of the mineralized matrix. Probably important to cell-matrix interaction. Its function is as follows. Acts as a cytokine involved in enhancing production of interferon-gamma and interleukin-12 and reducing production of interleukin-10 and is essential in the pathway that leads to type I immunity. The polypeptide is Osteopontin (SPP1) (Gallus gallus (Chicken)).